Here is a 784-residue protein sequence, read N- to C-terminus: LPS-assembly protein LptD (784 aa).

Positions 1-24 (MKKRIPTLLATMIASALYSHQGLA) are cleaved as a signal peptide. Disulfide bonds link cysteine 31-cysteine 724 and cysteine 173-cysteine 725.

It belongs to the LptD family. In terms of assembly, component of the lipopolysaccharide transport and assembly complex. Interacts with LptE and LptA. Contains two intramolecular disulfide bonds.

The protein localises to the cell outer membrane. Its function is as follows. Together with LptE, is involved in the assembly of lipopolysaccharide (LPS) at the surface of the outer membrane. The polypeptide is LPS-assembly protein LptD (Salmonella typhi).